Here is a 565-residue protein sequence, read N- to C-terminus: UV-stimulated scaffold protein A homolog (565 aa).

The VHS-like stretch occupies residues 11–156 (RKNLNRILQE…VTLRKTKFVD (146 aa)). A coiled-coil region spans residues 155 to 215 (VDYENGEKKI…ELETTMEMLV (61 aa)). The UVSSA-type zinc finger occupies 441-468 (DRECLAKLPSGALCKRKDMFKCPLHGPL). Residues Cys444, Cys454, Cys462, and His465 each coordinate Zn(2+). Positions 480–510 (DEDRLKEIDRKERKRLKEAEEFSRKIVKEYE) form a coiled coil. 2 disordered regions span residues 510–530 (ESKT…SRLQ) and 542–565 (VSAD…FSHL).

Belongs to the UVSSA family.

The protein resides in the chromosome. Factor involved in transcription-coupled nucleotide excision repair (TC-NER) in response to UV damage. TC-NER allows RNA polymerase II-blocking lesions to be rapidly removed from the transcribed strand of active genes. This chain is UV-stimulated scaffold protein A homolog, found in Caenorhabditis briggsae.